A 64-amino-acid polypeptide reads, in one-letter code: Large ribosomal subunit protein bL32 (64 aa).

This sequence belongs to the bacterial ribosomal protein bL32 family.

The polypeptide is Large ribosomal subunit protein bL32 (Flavobacterium johnsoniae (strain ATCC 17061 / DSM 2064 / JCM 8514 / BCRC 14874 / CCUG 350202 / NBRC 14942 / NCIMB 11054 / UW101) (Cytophaga johnsonae)).